The chain runs to 860 residues: Paladin (860 aa).

A disordered region spans residues 1-24 (MGTTASAAPQATLHERLHSDSMTD). The N-myristoyl glycine moiety is linked to residue Gly-2. Positions 13-24 (LHERLHSDSMTD) are enriched in basic and acidic residues.

The protein belongs to the paladin family.

The protein resides in the cytoplasm. It localises to the cytosol. This is Paladin (pald1) from Danio rerio (Zebrafish).